The primary structure comprises 293 residues: Small ribosomal subunit biogenesis GTPase RsgA (293 aa).

The CP-type G domain maps to 63-223 (KNELVRPPIA…VADTPGFSSL (161 aa)). GTP-binding positions include 112–115 (SKMD) and 166–174 (GQSGVGKSS). Residues C247, C252, H254, and C260 each contribute to the Zn(2+) site.

The protein belongs to the TRAFAC class YlqF/YawG GTPase family. RsgA subfamily. As to quaternary structure, monomer. Associates with 30S ribosomal subunit, binds 16S rRNA. Zn(2+) serves as cofactor.

Its subcellular location is the cytoplasm. In terms of biological role, one of several proteins that assist in the late maturation steps of the functional core of the 30S ribosomal subunit. Helps release RbfA from mature subunits. May play a role in the assembly of ribosomal proteins into the subunit. Circularly permuted GTPase that catalyzes slow GTP hydrolysis, GTPase activity is stimulated by the 30S ribosomal subunit. The protein is Small ribosomal subunit biogenesis GTPase RsgA of Bacillus anthracis.